Here is a 294-residue protein sequence, read N- to C-terminus: N-acetylmuramic acid 6-phosphate etherase (294 aa).

In terms of domain architecture, SIS spans 56–219 (TSYSLKNGGR…STLSMVSVGK (164 aa)). The active-site Proton donor is E84. The active site involves E115.

This sequence belongs to the GCKR-like family. MurNAc-6-P etherase subfamily. Homodimer.

It catalyses the reaction N-acetyl-D-muramate 6-phosphate + H2O = N-acetyl-D-glucosamine 6-phosphate + (R)-lactate. It functions in the pathway amino-sugar metabolism; 1,6-anhydro-N-acetylmuramate degradation. Its pathway is amino-sugar metabolism; N-acetylmuramate degradation. The protein operates within cell wall biogenesis; peptidoglycan recycling. Its function is as follows. Specifically catalyzes the cleavage of the D-lactyl ether substituent of MurNAc 6-phosphate, producing GlcNAc 6-phosphate and D-lactate. Together with AnmK, is also required for the utilization of anhydro-N-acetylmuramic acid (anhMurNAc) either imported from the medium or derived from its own cell wall murein, and thus plays a role in cell wall recycling. This chain is N-acetylmuramic acid 6-phosphate etherase, found in Francisella tularensis subsp. novicida (strain U112).